We begin with the raw amino-acid sequence, 337 residues long: uncharacterized protein (337 aa).

Residues 1 to 11 (MSEIEEEEEEG) are compositionally biased toward acidic residues. A disordered region spans residues 1–20 (MSEIEEEEEEGSASAITGSR). The residue at position 2 (Ser2) is an N-acetylserine. A coiled-coil region spans residues 50–130 (ALSTRVSALE…LQRDVSKLEG (81 aa)). The tract at residues 139–242 (LQDDDQNAGT…PISPRRHSVS (104 aa)) is disordered. The span at 170–182 (SSIQSQQASEAIE) shows a compositional bias: low complexity. The span at 197–211 (LSASLPLVSQTTTPR) shows a compositional bias: polar residues. Thr213 bears the Phosphothreonine mark. Position 217 is a phosphoserine (Ser217). Polar residues predominate over residues 223-233 (ASGTPKTTSRP). The residue at position 226 (Thr226) is a Phosphothreonine. Phosphoserine is present on Ser235.

This is an uncharacterized protein from Arabidopsis thaliana (Mouse-ear cress).